The primary structure comprises 344 residues: Aromatic amino acid aminotransferase (344 aa).

An N6-(pyridoxal phosphate)lysine modification is found at K213.

Belongs to the class-II pyridoxal-phosphate-dependent aminotransferase family. In terms of assembly, homodimer. Pyridoxal 5'-phosphate is required as a cofactor.

The enzyme catalyses an aromatic L-alpha-amino acid + 2-oxoglutarate = an aromatic oxo-acid + L-glutamate. Functionally, aminotransferase that catalyzes the conversion of aromatic amino acids and 2-oxoglutarate into corresponding aromatic oxo acids and L-glutamate. This Corynebacterium diphtheriae (strain ATCC 700971 / NCTC 13129 / Biotype gravis) protein is Aromatic amino acid aminotransferase.